Here is a 134-residue protein sequence, read N- to C-terminus: Cytochrome b (134 aa).

Helical transmembrane passes span phenylalanine 33–methionine 53, tryptophan 77–valine 98, and tryptophan 113–leucine 133. Residues histidine 83 and histidine 97 each contribute to the heme b site.

The protein belongs to the cytochrome b family. As to quaternary structure, the cytochrome bc1 complex contains 11 subunits: 3 respiratory subunits (MT-CYB, CYC1 and UQCRFS1), 2 core proteins (UQCRC1 and UQCRC2) and 6 low-molecular weight proteins (UQCRH/QCR6, UQCRB/QCR7, UQCRQ/QCR8, UQCR10/QCR9, UQCR11/QCR10 and a cleavage product of UQCRFS1). This cytochrome bc1 complex then forms a dimer. Heme b is required as a cofactor.

It is found in the mitochondrion inner membrane. Component of the ubiquinol-cytochrome c reductase complex (complex III or cytochrome b-c1 complex) that is part of the mitochondrial respiratory chain. The b-c1 complex mediates electron transfer from ubiquinol to cytochrome c. Contributes to the generation of a proton gradient across the mitochondrial membrane that is then used for ATP synthesis. This Chiroderma salvini (Salvin's big-eyed bat) protein is Cytochrome b (MT-CYB).